A 95-amino-acid polypeptide reads, in one-letter code: ESAT-6-like protein EsxC (95 aa).

This sequence belongs to the WXG100 family. ESAT-6 subfamily.

It localises to the secreted. This is ESAT-6-like protein EsxC from Mycobacterium tuberculosis (strain CDC 1551 / Oshkosh).